A 156-amino-acid polypeptide reads, in one-letter code: Arginine repressor (156 aa).

The protein belongs to the ArgR family.

The protein localises to the cytoplasm. Its pathway is amino-acid biosynthesis; L-arginine biosynthesis [regulation]. Regulates arginine biosynthesis genes. This Pectobacterium atrosepticum (strain SCRI 1043 / ATCC BAA-672) (Erwinia carotovora subsp. atroseptica) protein is Arginine repressor.